The following is a 437-amino-acid chain: GTPase Obg (437 aa).

Residues 2–160 enclose the Obg domain; the sequence is SMFLDTAKIS…RQLELELKIL (159 aa). The region spanning 161-338 is the OBG-type G domain; it reads ADVGLVGFPS…LLEATAELLA (178 aa). Residues 167–174, 192–196, 214–217, 284–287, and 319–321 contribute to the GTP site; these read GFPSVGKS, FTTIV, DLPG, NKMD, and SSL. Residues Ser174 and Thr194 each contribute to the Mg(2+) site. The OCT domain maps to 359 to 437; the sequence is GFAETEKDFE…IGKFEFEFVD (79 aa).

The protein belongs to the TRAFAC class OBG-HflX-like GTPase superfamily. OBG GTPase family. In terms of assembly, monomer. Mg(2+) is required as a cofactor.

Its subcellular location is the cytoplasm. In terms of biological role, an essential GTPase which binds GTP, GDP and possibly (p)ppGpp with moderate affinity, with high nucleotide exchange rates and a fairly low GTP hydrolysis rate. Plays a role in control of the cell cycle, stress response, ribosome biogenesis and in those bacteria that undergo differentiation, in morphogenesis control. This Streptococcus pyogenes serotype M1 protein is GTPase Obg.